The sequence spans 181 residues: Ribulose bisphosphate carboxylase small subunit, chloroplastic 6 (181 aa).

A chloroplast-targeting transit peptide spans 1-57 (MASSIVSSAAVATRSNVAQASMVAPFTGLKSAASFPVTKKNNNVDITSLASNGGRVR).

This sequence belongs to the RuBisCO small chain family. As to quaternary structure, heterohexadecamer of 8 large and 8 small subunits.

The protein localises to the plastid. Its subcellular location is the chloroplast. Functionally, ruBisCO catalyzes two reactions: the carboxylation of D-ribulose 1,5-bisphosphate, the primary event in carbon dioxide fixation, as well as the oxidative fragmentation of the pentose substrate. Both reactions occur simultaneously and in competition at the same active site. Although the small subunit is not catalytic it is essential for maximal activity. This chain is Ribulose bisphosphate carboxylase small subunit, chloroplastic 6, found in Solanum tuberosum (Potato).